A 183-amino-acid polypeptide reads, in one-letter code: Apo-citrate lyase phosphoribosyl-dephospho-CoA transferase (183 aa).

It belongs to the CitX family.

The catalysed reaction is apo-[citrate lyase ACP] + 2'-(5''-triphospho-alpha-D-ribosyl)-3'-dephospho-CoA = holo-[citrate lyase ACP] + diphosphate. Its function is as follows. Transfers 2-(5''-triphosphoribosyl)-3'-dephosphocoenzyme-A on a serine residue to the apo-acyl carrier protein (gamma chain) of the citrate lyase to yield holo-acyl carrier protein. The chain is Apo-citrate lyase phosphoribosyl-dephospho-CoA transferase from Escherichia coli O139:H28 (strain E24377A / ETEC).